Here is a 413-residue protein sequence, read N- to C-terminus: Aspartate aminotransferase, cytoplasmic (413 aa).

The L-aspartate site is built by G39 and W141. A Phosphoserine modification is found at S149. N195 lines the L-aspartate pocket. The residue at position 259 (K259) is an N6-(pyridoxal phosphate)lysine. K318 carries the post-translational modification N6-succinyllysine. R387 provides a ligand contact to L-aspartate.

It belongs to the class-I pyridoxal-phosphate-dependent aminotransferase family. In terms of assembly, homodimer. Pyridoxal 5'-phosphate is required as a cofactor. Expressed in neurons of the retina. Localizes to the inner and outer plexiform layers, the inner and outer nuclear layer and the outer segments of photoreceptors.

The protein localises to the cytoplasm. It catalyses the reaction L-aspartate + 2-oxoglutarate = oxaloacetate + L-glutamate. It carries out the reaction L-cysteine + 2-oxoglutarate = 2-oxo-3-sulfanylpropanoate + L-glutamate. The enzyme catalyses (2S)-2-aminobutanoate + 2-oxoglutarate = 2-oxobutanoate + L-glutamate. The catalysed reaction is 3-sulfino-L-alanine + 2-oxoglutarate = 3-sulfinopyruvate + L-glutamate. Inhibited by calcium ions. Its function is as follows. Biosynthesis of L-glutamate from L-aspartate or L-cysteine. Important regulator of levels of glutamate, the major excitatory neurotransmitter of the vertebrate central nervous system. Acts as a scavenger of glutamate in brain neuroprotection. The aspartate aminotransferase activity is involved in hepatic glucose synthesis during development and in adipocyte glyceroneogenesis. Using L-cysteine as substrate, regulates levels of mercaptopyruvate, an important source of hydrogen sulfide. Mercaptopyruvate is converted into H(2)S via the action of 3-mercaptopyruvate sulfurtransferase (3MST). Hydrogen sulfide is an important synaptic modulator and neuroprotectant in the brain. The sequence is that of Aspartate aminotransferase, cytoplasmic from Mus musculus (Mouse).